We begin with the raw amino-acid sequence, 368 residues long: Galanin receptor type 3 (368 aa).

At 1–20 (MADAQNISLDSPGSVGAVAV) the chain is on the extracellular side. N6 carries N-linked (GlcNAc...) asparagine glycosylation. Residues 21 to 41 (PVVFALIFLLGTVGNGLVLAV) form a helical membrane-spanning segment. Over 42-57 (LLQPGPSAWQEPGSTT) the chain is Cytoplasmic. A helical transmembrane segment spans residues 58–78 (DLFILNLAVADLCFILCCVPF). Over 79 to 96 (QATIYTLDAWLFGALVCK) the chain is Extracellular. A disulfide bridge connects residues C95 and C172. A helical transmembrane segment spans residues 97–118 (AVHLLIYLTMYASSFTLAAVSV). The Cytoplasmic portion of the chain corresponds to 119-138 (DRYLAVRHPLRSRALRTPRN). Residues 139–159 (ARAAVGLVWLLAALFSAPYLS) form a helical membrane-spanning segment. Over 160 to 184 (YYGTVRYGALELCVPAWEDARRRAL) the chain is Extracellular. The chain crosses the membrane as a helical span at residues 185–205 (DVATFAAGYLLPVAVVSLAYG). At 206-236 (RTLRFLWAAVGPAGAAAAEARRRATGRAGRA) the chain is on the cytoplasmic side. Residues 237 to 257 (MLAVAALYALCWGPHHALILC) form a helical membrane-spanning segment. The Extracellular segment spans residues 258-259 (FW). A helical membrane pass occupies residues 260 to 280 (YGRFAFSPATYACRLASHCLA). Residues 281-368 (YANSCLNPLV…HGGEAARGPE (88 aa)) are Cytoplasmic-facing. C308 is lipidated: S-palmitoyl cysteine. Residues 317 to 368 (RRALRRVRPASSGPPGCPGDARPSGRLLAGGGQGPEPREGPVHGGEAARGPE) form a disordered region.

It belongs to the G-protein coupled receptor 1 family.

The protein localises to the cell membrane. In terms of biological role, receptor for the hormone galanin. Receptor for the hormone spexin-1. The chain is Galanin receptor type 3 (GALR3) from Homo sapiens (Human).